A 1375-amino-acid polypeptide reads, in one-letter code: MSTQTRSGGGGGGGHARNQKKSNASNSGGGGTGHHDGVSHAAAAGKKGGQDASKTDKPEKAQPKATTEQLRIAQITNSTTEDPQINEKVLLLLTMTQRSEEEVCCALNECDYDLEAAANFLIEELPQGAFAKYEKKRKNKAANNTADGAAGDGDWADGNGNADRREKSRNRSSNRGGTRGSSDSRGWRGRETRENERNQRESREPWSGQNAGQDRGDDRANDNYRGQRNGGGRSGPGGGGRGGGFVSRSGRGGGRMGGRTGGPRGDRGSGGPGGAYGSGRGGNANEDHHEVELWDNTIAQNAEKQQQAHDDAWGDWNNEEYEGSLKDSKVFTTSNLATQSAANVVSGTGASVTAVPAAAGTEISAPPGLEHQLVQQGSHLEESSSSGPAAVTPPATLSGSATTPLLQYSAAVSNPPPQLQSQGTQSGAGTGASAAAGGGAGSTPSSFVSASPDTFSSAASAAATLVHQAQKQQQLQQQTTPIKPSATLSVEQSQYFNSLASQGVSPGSVPVQSAPAGYAQNPVAAYSQTSTSVGVSQYPNTYANVFASGTAAGAGTAEQSQQQPQIRRARVKLPPPSKIPASAVEMPGDNALNNIGYLDVQFGALDFGTDDGFEPLPEKVGSGFSIDGQQQQQQPDDYQSKSQQQQQVTLAAGLQSSQISDALNAAGYTSRSTSQQQQGVSSAVNATIDQLTKSDPYGQTGGSGNAYQNAYQSSGASKTASGFPTTAPGGYSSSTYANVQSSVANSYQQQGYGSYQPSSYQQQAGSGAQSGTGAVSGGGGTATQNIPVGGSSSQNSTSGNASSAYLTSGYSTPQSAYQSSQSVYGNTGLSNSSGFSGSASNASSQYANFSASAKLKDATTASSAAHYDSVSTSSGVSSNSGSTGNGGVVSGQTGANQAAVSNNNSVSGSSSVSNVTAGVASGNVAGVGGGVSQSGVSSGVGVPGGSASSVGVNVNNNSSSASSVGAATVAQTATGTTAAVLASLTNKNTSSSNSSGSGGSAATTTGNASGQGAGASTGGVGSSSGAGGAGSGGGSGSGLVPTNIQMVSQYIQTGLPYYQQPVYSYEELQMMQQRVPHVQGYYDLNYPPASLGAGRDNLGSVTYSAMNDGRFARTDNNSSPVGNVSSTMSQQAGSSAPMLNVPYAYFYGGNVMPGSFQYGTPAIYPQIPAANTASGQQFPKPSYSAGYGSTSYDTLSQTTQDYSKGGYSSSVNQQSKTQTVSNQSQAGTGSDLTSSMYGKGHVALNKVNSYEKQSFHSGTPPPFNMPNTQTAGGTSAQPYGMYLPMPAAGHHNMIHQPIHQVHSELPLQVVVGGGTESHVLIHGNVNGPQVTYHRIWQTEPVQCQNQLVAAHCNNFEPNIDCCVHDNNNDLSFFAD.

The tract at residues 1-69 (MSTQTRSGGG…KAQPKATTEQ (69 aa)) is disordered. Basic and acidic residues predominate over residues 53–62 (SKTDKPEKAQ). A UBA domain is found at 84–124 (QINEKVLLLLTMTQRSEEEVCCALNECDYDLEAAANFLIEE). Composition is skewed to low complexity over residues 142–161 (ANNT…GNGN) and 173–184 (SNRGGTRGSSDS). The disordered stretch occupies residues 142-286 (ANNTADGAAG…GSGRGGNANE (145 aa)). Residues 185-204 (RGWRGRETRENERNQRESRE) show a composition bias toward basic and acidic residues. A compositionally biased stretch (gly residues) spans 228–282 (RNGGGRSGPGGGGRGGGFVSRSGRGGGRMGGRTGGPRGDRGSGGPGGAYGSGRGG). Tyr-321 is subject to Phosphotyrosine. A Phosphoserine modification is found at Ser-324. 2 stretches are compositionally biased toward polar residues: residues 374-387 (VQQG…SSSG) and 395-412 (ATLS…SAAV). 2 disordered regions span residues 374 to 453 (VQQG…ASPD) and 613 to 646 (FEPL…QQQQ). The span at 426 to 441 (SGAGTGASAAAGGGAG) shows a compositional bias: gly residues. Composition is skewed to low complexity over residues 442 to 453 (STPSSFVSASPD) and 629 to 646 (QQQQ…QQQQ). Ser-672 carries the phosphoserine modification. Thr-673 bears the Phosphothreonine mark. Ser-674 carries the phosphoserine modification. Residues 750–767 (QGYGSYQPSSYQQQAGSG) are compositionally biased toward low complexity. Disordered stretches follow at residues 750 to 801 (QGYG…SGNA), 869 to 894 (SVST…GQTG), 987 to 1036 (KNTS…GGSG), 1203 to 1234 (SKGG…DLTS), and 1251 to 1277 (EKQS…TSAQ). Positions 768–781 (AQSGTGAVSGGGGT) are enriched in gly residues. Composition is skewed to low complexity over residues 789–801 (GGSS…SGNA), 869–882 (SVST…NSGS), and 987–1008 (KNTS…TGNA). Residues 1009 to 1036 (SGQGAGASTGGVGSSSGAGGAGSGGGSG) show a composition bias toward gly residues. A compositionally biased stretch (polar residues) spans 1265 to 1277 (MPNTQTAGGTSAQ).

As to expression, at stage 11, expression is restricted to the neuroblasts, predominant in the central nervous system (CNS), including the brain and ventral nerve cord, and in the PNS. Later embryonic expression is seen in the gonads. Late third instar larvae show expression in the CNS, imaginal disks (including genital, eye-antennal, leg, wing and haltere disks), and gonads. In the larval brain, it is expressed in all of the glial cells and in clusters of neurons that projected contralaterally. In the larval ventral ganglion, it is expressed in subperineurial glia, peripheral exit glia, and a number of interneurons, but not in motor neurons. Isoform B is abundantly expressed in males and females. Isoform D is male specific and expressed at low levels.

The protein resides in the cytoplasm. Functionally, acts in the nervous system to mediate the control of copulatory organs during courtship. In Drosophila melanogaster (Fruit fly), this protein is Protein lingerer.